The sequence spans 497 residues: Cytochrome P450 98A8 (497 aa).

Residues 2-19 (IIYLISLLPIIVATLMLY) form a helical membrane-spanning segment. Cysteine 431 contributes to the heme binding site.

It belongs to the cytochrome P450 family. Requires heme as cofactor. Strongly expressed in inflorescence tips, young flower buds, seeds, stamen, tapetum and pollen.

The protein localises to the membrane. Acts redundantly with CYP98A9 as tricoumaroylspermidine meta-hydroxylase. Also catalyzes the meta-hydroxylation of the three triferuloylspermidine phenolic rings. Unable to use 5-O-(4-coumaroyl) D-quinate or 5-O-(4-coumaroyl) shikimate as substrates. The sequence is that of Cytochrome P450 98A8 (CYP98A8) from Arabidopsis thaliana (Mouse-ear cress).